A 204-amino-acid polypeptide reads, in one-letter code: Probable GTP-binding protein EngB (204 aa).

Residues Met1 to Pro21 are disordered. An EngB-type G domain is found at Glu22–Ala194. Residues Gly30–Ser37, Gly57–Leu61, Asp75–Gly78, Thr142–Asp145, and Phe173–Ala175 each bind GTP. Mg(2+) is bound by residues Ser37 and Thr59.

It belongs to the TRAFAC class TrmE-Era-EngA-EngB-Septin-like GTPase superfamily. EngB GTPase family. Mg(2+) serves as cofactor.

In terms of biological role, necessary for normal cell division and for the maintenance of normal septation. The polypeptide is Probable GTP-binding protein EngB (Geobacter metallireducens (strain ATCC 53774 / DSM 7210 / GS-15)).